A 459-amino-acid chain; its full sequence is Cysteine--tRNA ligase (459 aa).

C28 serves as a coordination point for Zn(2+). The 'HIGH' region motif lies at 30-40 (VTVYDLCHIGH). Zn(2+) contacts are provided by C209, H234, and E238. Positions 266–270 (KMSKS) match the 'KMSKS' region motif. An ATP-binding site is contributed by K269.

Belongs to the class-I aminoacyl-tRNA synthetase family. In terms of assembly, monomer. Requires Zn(2+) as cofactor.

The protein resides in the cytoplasm. It catalyses the reaction tRNA(Cys) + L-cysteine + ATP = L-cysteinyl-tRNA(Cys) + AMP + diphosphate. The polypeptide is Cysteine--tRNA ligase (Histophilus somni (strain 129Pt) (Haemophilus somnus)).